We begin with the raw amino-acid sequence, 186 residues long: ATP-dependent protease subunit HslV (186 aa).

Residue threonine 14 is part of the active site. Na(+) contacts are provided by alanine 168, cysteine 171, and threonine 174.

The protein belongs to the peptidase T1B family. HslV subfamily. A double ring-shaped homohexamer of HslV is capped on each side by a ring-shaped HslU homohexamer. The assembly of the HslU/HslV complex is dependent on binding of ATP.

It is found in the cytoplasm. It catalyses the reaction ATP-dependent cleavage of peptide bonds with broad specificity.. Its activity is regulated as follows. Allosterically activated by HslU binding. Functionally, protease subunit of a proteasome-like degradation complex believed to be a general protein degrading machinery. The chain is ATP-dependent protease subunit HslV from Bradyrhizobium diazoefficiens (strain JCM 10833 / BCRC 13528 / IAM 13628 / NBRC 14792 / USDA 110).